A 310-amino-acid chain; its full sequence is GPN-loop GTPase 2 (310 aa).

Position 2 is an N-acetylalanine (alanine 2). 19 to 24 (GSGKTT) serves as a coordination point for GTP. Positions 76–78 (GPN) match the Gly-Pro-Asn (GPN)-loop; involved in dimer interface motif. 178–181 (SKMD) is a binding site for GTP.

The protein belongs to the GPN-loop GTPase family. In terms of assembly, heterodimers with GPN1 or GPN3. Binds to RNA polymerase II (RNAPII).

Its function is as follows. Small GTPase required for proper localization of RNA polymerase II and III (RNAPII and RNAPIII). May act at an RNAP assembly step prior to nuclear import. The chain is GPN-loop GTPase 2 from Sus scrofa (Pig).